Reading from the N-terminus, the 477-residue chain is MDFQHRPGGKTGSGGVASSSESNRDRRERLRQLALETIDINKDPYFMKNHLGSYECKLCLTLHNNEGSYLAHTQGKKHQTNLARRAAKEAKEAPAQPAPEKVKVEVKKFVKIGRPGYKVTKQRDTEMGQQSLLFQIDYPEIAEGIMPRHRFMSAYEQRIEPPDRRWQYLLMAAEPYETIAFKVPSREIDKAEGKFWTHWNRETKQFFLQFHFKMEKPPAPPSLPAGPPGVKRPPPPLMNGLPPRPPLPESLPPPPPGGLPLPPMPPSGPAPSGPPGPPQLPPPAPGVHPPAPVVHPPASGVHPPAPGVHPPAPGVHPPAPVVHPPASGVHPPAPGVHPPAPGVHPPAPGVHPPAPGVHPPPSAGVHPQAPVVHPPAPAVHPQAPGVHPTPAVHPQAPGVHPPAPGVHPPAPGIHPQPPGVHPPPPGVHPPAPGVHPQPPGVHPSNPGVHPPTPMPPMLRPPLPSEGPGNIPPPPPTN.

The residue at position 1 (M1) is an N-acetylmethionine. Residues 1-27 form a disordered region; sequence MDFQHRPGGKTGSGGVASSSESNRDRR. K10 carries the N6-acetyllysine modification. Residues 54–84 form a Matrin-type zinc finger; sequence YECKLCLTLHNNEGSYLAHTQGKKHQTNLAR. S153 is subject to Phosphoserine. 3 stretches are compositionally biased toward pro residues: residues 217-295, 303-323, and 331-362; these read PPAP…PVVH and PPAP…PPPS. Positions 217–477 are disordered; sequence PPAPPSLPAG…GNIPPPPPTN (261 aa). The segment covering 379–398 has biased composition (low complexity); that stretch reads VHPQAPGVHPTPAVHPQAPG. Composition is skewed to pro residues over residues 399-441 and 448-477; these read VHPP…PPGV and VHPP…PPTN.

Belongs to the SF3A2 family. As to quaternary structure, component of the 17S U2 SnRNP complex, a ribonucleoprotein complex that contains small nuclear RNA (snRNA) U2 and a number of specific proteins. Part of the SF3A subcomplex of the 17S U2 SnRNP complex which is composed of three subunits; SF3A3/SAP61, SF3A2/SAP62 and SF3A1/SAP114. SF3A associates with the splicing factor SF3B and a 12S RNA unit to form the mature 17S U2 small nuclear ribonucleoprotein complex (17S U2 snRNP). Identified in the spliceosome 'E' complex, a precursor of the spliceosome 'A' complex. Identified in the spliceosome 'A' and 'B' complexes. Identified in the spliceosome 'C' complex. Interacts with HTATSF1.

It localises to the nucleus. In terms of biological role, component of the 17S U2 SnRNP complex of the spliceosome, a large ribonucleoprotein complex that removes introns from transcribed pre-mRNAs. The 17S U2 SnRNP complex (1) directly participates in early spliceosome assembly and (2) mediates recognition of the intron branch site during pre-mRNA splicing by promoting the selection of the pre-mRNA branch-site adenosine, the nucleophile for the first step of splicing. Within the 17S U2 SnRNP complex, SF3A2 is part of the SF3A subcomplex that contributes to the assembly of the 17S U2 snRNP, and the subsequent assembly of the pre-spliceosome 'E' complex and the pre-catalytic spliceosome 'A' complex. Involved in pre-mRNA splicing as a component of pre-catalytic spliceosome 'B' complexes, including the Bact complex. Interacts directly with the duplex formed by U2 snRNA and the intron. This Bos taurus (Bovine) protein is Splicing factor 3A subunit 2 (SF3A2).